A 146-amino-acid chain; its full sequence is Large ribosomal subunit protein bL19 (146 aa).

The tract at residues 119 to 146 (DYRKKGEKGVEKVETTPVSADIETQVAE) is disordered.

Belongs to the bacterial ribosomal protein bL19 family.

Its function is as follows. This protein is located at the 30S-50S ribosomal subunit interface and may play a role in the structure and function of the aminoacyl-tRNA binding site. The protein is Large ribosomal subunit protein bL19 of Bartonella tribocorum (strain CIP 105476 / IBS 506).